The chain runs to 286 residues: Ribosomal RNA small subunit methyltransferase A (286 aa).

6 residues coordinate S-adenosyl-L-methionine: asparagine 28, leucine 30, glycine 55, glutamate 77, aspartate 103, and asparagine 123.

This sequence belongs to the class I-like SAM-binding methyltransferase superfamily. rRNA adenine N(6)-methyltransferase family. RsmA subfamily.

It localises to the cytoplasm. The catalysed reaction is adenosine(1518)/adenosine(1519) in 16S rRNA + 4 S-adenosyl-L-methionine = N(6)-dimethyladenosine(1518)/N(6)-dimethyladenosine(1519) in 16S rRNA + 4 S-adenosyl-L-homocysteine + 4 H(+). In terms of biological role, specifically dimethylates two adjacent adenosines (A1518 and A1519) in the loop of a conserved hairpin near the 3'-end of 16S rRNA in the 30S particle. May play a critical role in biogenesis of 30S subunits. The polypeptide is Ribosomal RNA small subunit methyltransferase A (Bradyrhizobium sp. (strain ORS 278)).